A 542-amino-acid polypeptide reads, in one-letter code: Nuclear hormone receptor family member nhr-35 (542 aa).

The nuclear receptor DNA-binding region spans 74-149; sequence NSICHICSDV…SGMRDDQVQS (76 aa). NR C4-type zinc fingers lie at residues 77–97 and 113–137; these read CHICSDVATGRHYGAIACNGC and CRFESKCEIDKHNRAVCRYCRFMKC. The region spanning 186–438 is the NR LBD domain; the sequence is EYDQLLESLL…VLMEELILAE (253 aa). The segment at 445–487 is disordered; sequence RQDQTPCSIMNDTPSGSQDMCSPCPEDLLRTSTSSNSPTNSSL. Positions 448-464 are enriched in polar residues; it reads QTPCSIMNDTPSGSQDM. Residues 475-487 are compositionally biased toward low complexity; it reads TSTSSNSPTNSSL.

The protein belongs to the nuclear hormone receptor family.

The protein localises to the nucleus. Orphan nuclear receptor. The sequence is that of Nuclear hormone receptor family member nhr-35 (nhr-35) from Caenorhabditis elegans.